We begin with the raw amino-acid sequence, 1037 residues long: Receptor kinase-like protein Xa21 (1037 aa).

Positions 1-24 (MARSPTSVMISSLLLLLLIGPASS) are cleaved as a signal peptide. The Extracellular portion of the chain corresponds to 25–665 (DDAAAAAAAR…LLENRKHFPV (641 aa)). Asparagine 66, asparagine 101, and asparagine 112 each carry an N-linked (GlcNAc...) asparagine glycan. LRR repeat units lie at residues 89–112 (PHRV…SLGN), 113–137 (LSFL…LSRL), 138–161 (SRLQ…IGAC), 163–185 (KLTS…IGAS), 187–210 (KHLS…LGNL), 211–234 (TSLQ…LGQL), 236–259 (SSLL…IWNL), 260–283 (SSLR…AFKT), 285–308 (HLLE…VANA), 310–331 (HLTQ…GFGR), and 333–355 (RNLT…DWGF). Asparagine 209 carries N-linked (GlcNAc...) asparagine glycosylation. N-linked (GlcNAc...) asparagine glycosylation is found at asparagine 247 and asparagine 258. The N-linked (GlcNAc...) asparagine glycan is linked to asparagine 307. 3 N-linked (GlcNAc...) asparagine glycosylation sites follow: asparagine 334, asparagine 361, and asparagine 385. LRR repeat units follow at residues 362–385 (CSKL…SFSN), 387–411 (STSL…IGNL), 412–435 (IGLQ…LGRL), 437–459 (NLGI…IGNL), 460–482 (TELN…TLSN), 483–507 (LTNL…LFNI), 509–532 (TLSI…IGHL), 533–556 (KNLV…LGDC), 557–580 (QLLR…LGQL), 581–604 (KGLE…LADI), and 606–629 (MLHS…AFAD). Residues asparagine 447, asparagine 458, asparagine 482, asparagine 495, and asparagine 515 are each glycosylated (N-linked (GlcNAc...) asparagine). Asparagine 592 and asparagine 611 each carry an N-linked (GlcNAc...) asparagine glycan. A helical membrane pass occupies residues 666-686 (LPISVSLVAALAILSSLYLLI). Topologically, residues 687–1037 (TWHKRTKKGA…PVCEGASLEF (351 aa)) are cytoplasmic. Residues 689-694 (HKRTKK) carry the Nuclear localization signal motif. Residue serine 698 is modified to Phosphoserine. Threonine 700 is modified (phosphothreonine). Serine 701 carries the phosphoserine modification. Phosphothreonine is present on threonine 717. One can recognise a Protein kinase domain in the interval 720–1019 (FAPTNLLGSG…GDIIDELNAI (300 aa)). ATP contacts are provided by residues 726–734 (LGSGSFGSV) and lysine 748. The active-site Proton acceptor is aspartate 854.

The protein belongs to the protein kinase superfamily. Ser/Thr protein kinase family. As to quaternary structure, interacts with WRKY62/XB10 in the nucleus. Interacts with SERK2. It depends on Mn(2+) as a cofactor. The cofactor is Mg(2+). Post-translationally, undergoes protein cleavage upon X.oryzae pv. oryzae protein Ax21 detection, thus releasing the processed protein kinase Xa21 chain. Autophosphorylated on serine and threonine residues; these phosphorylation prevents proteolytic degradation.

It is found in the cell membrane. It localises to the endoplasmic reticulum membrane. The protein localises to the nucleus. The catalysed reaction is L-seryl-[protein] + ATP = O-phospho-L-seryl-[protein] + ADP + H(+). The enzyme catalyses L-threonyl-[protein] + ATP = O-phospho-L-threonyl-[protein] + ADP + H(+). Functionally, receptor kinase that detects X.oryzae pv. oryzae protein Ax21 to promote innate immunity. Following X.oryzae pv. oryzae protein Ax21 detection, undergoes cleavage, releasing the processed protein kinase Xa21 chain. The processed protein kinase Xa21 chain released by protein cleavage after X.oryzae pv. oryzae protein Ax21 detection translocates into the nucleus where it can bind and regulate WRKY62, a transcription factor. Confers resistance to the bacterial pathogen X.oryzae pv. oryzae (Xoo). This is Receptor kinase-like protein Xa21 from Oryza sativa subsp. japonica (Rice).